Consider the following 550-residue polypeptide: MAAKDVKFGNDARIKMLRGVNILADAVKVTLGPKGRNVVLDKSFGSPTITKDGVSVAREIELEDKFENMGAQMVKEVASKANDAAGDGTTTATVLAQSIITEGLKAVAAGMNPMDLKRGIDKAVIAAVEELKKLSVPCSDSKAIAQVGTISANSDSTVGELIAQAMEKVGKEGVITVEEGSGLQDELDVVEGMQFDRGYLSPYFINKPETGSIELESPFILLADKKISNIREMLPVLEAVAKAGKPLLIIAEDVEGEALATLVVNTMRGIVKVAAVKAPGFGDRRKAMLQDIATLTAGTVISEEIGLELEKTTLEDLGQAKRVVINKDTTIIIDGVGDEAAIQGRVAQIRQQIEEATSDYDKEKLQERVAKLAGGVAVIKVGAATEVEMKEKKARVEDALHATRAAVEEGVVAGGGVALIRAASAITAAGLKGDNEDQNVGIKVALRAMESPLRQIVVNAGEEASVIANNVKAGSGSYGYNAYSEEYGDMIAMGILDPTKVTRSALQYAASIAGLMITTECMITDLPRDDKGADMGAGGMGGMGGMGGMM.

ATP-binding positions include 30–33 (TLGP), Lys-51, 87–91 (DGTTT), Gly-415, and Asp-497.

The protein belongs to the chaperonin (HSP60) family. In terms of assembly, forms a cylinder of 14 subunits composed of two heptameric rings stacked back-to-back. Interacts with the co-chaperonin GroES.

Its subcellular location is the cytoplasm. The enzyme catalyses ATP + H2O + a folded polypeptide = ADP + phosphate + an unfolded polypeptide.. Together with its co-chaperonin GroES, plays an essential role in assisting protein folding. The GroEL-GroES system forms a nano-cage that allows encapsulation of the non-native substrate proteins and provides a physical environment optimized to promote and accelerate protein folding. The protein is Chaperonin GroEL of Yersinia enterocolitica.